Reading from the N-terminus, the 86-residue chain is Small ribosomal subunit protein bS20 (86 aa).

The segment at 1-25 (MANIKSQIKRIRTNEKARQRNKAYK) is disordered. Residues 12-25 (RTNEKARQRNKAYK) show a composition bias toward basic and acidic residues.

This sequence belongs to the bacterial ribosomal protein bS20 family.

Binds directly to 16S ribosomal RNA. The chain is Small ribosomal subunit protein bS20 from Beutenbergia cavernae (strain ATCC BAA-8 / DSM 12333 / CCUG 43141 / JCM 11478 / NBRC 16432 / NCIMB 13614 / HKI 0122).